A 327-amino-acid polypeptide reads, in one-letter code: MTAAAGNKDHQKVILVGDGAVGSSYAFALVTQNIAQEVGIIDINVPKTEGDALDLSHALAFTSPKKIYAATYDDCHDADLVVLTAGAPQKPGETRLDLVHKNLKINKEIVTTIVDSGFNGIFLVAANPVDILTYSTWKFSGFPKERVIGSGTSLDSARFRQAIAELVDVDARNVHAYILGEHGDTEFPVWSHANVAGLQIYEWVKNNPDVDEEAMVNLFFNVRDAAYTIIEKKGATFYGIAVALARITKAILNDENSVLPLSVYLEGEYGQNDIYIGAPAIINRQGVKQVIEIPLTDAEQEKMEASASALKEVIETAFAKFEAEEAK.

NAD(+) is bound by residues V21, D42, K47, Y72, and 86 to 87 (GA). Substrate-binding positions include Q89, R95, and 127 to 130 (NPVD). NAD(+)-binding positions include 125–127 (AAN) and S150. 155–158 (DSAR) is a substrate binding site. Residues R160 and H175 each contribute to the beta-D-fructose 1,6-bisphosphate site. H182 functions as the Proton acceptor in the catalytic mechanism. Y227 is subject to Phosphotyrosine. T236 provides a ligand contact to substrate.

The protein belongs to the LDH/MDH superfamily. LDH family. Homotetramer.

It localises to the cytoplasm. The catalysed reaction is (S)-lactate + NAD(+) = pyruvate + NADH + H(+). The protein operates within fermentation; pyruvate fermentation to lactate; (S)-lactate from pyruvate: step 1/1. Allosterically activated by fructose 1,6-bisphosphate (FBP). Catalyzes the conversion of lactate to pyruvate. The chain is L-lactate dehydrogenase 1 from Enterococcus faecalis (strain ATCC 700802 / V583).